A 623-amino-acid chain; its full sequence is Indolepyruvate oxidoreductase subunit IorA (623 aa).

Residues cysteine 573, cysteine 576, cysteine 579, cysteine 585, cysteine 602, cysteine 605, cysteine 608, and cysteine 612 each contribute to the [4Fe-4S] cluster site. The region spanning 593-622 (EKVSIDQSLCVGCAVCAKICPNRAIKPAKS) is the 4Fe-4S ferredoxin-type domain.

As to quaternary structure, heterodimer of the IorA and IorB subunits. Requires [4Fe-4S] cluster as cofactor.

The catalysed reaction is indole-3-pyruvate + 2 oxidized [2Fe-2S]-[ferredoxin] + CoA = (indol-3-yl)acetyl-CoA + 2 reduced [2Fe-2S]-[ferredoxin] + CO2 + H(+). Functionally, catalyzes the ferredoxin-dependent oxidative decarboxylation of arylpyruvates. This chain is Indolepyruvate oxidoreductase subunit IorA (iorA), found in Archaeoglobus fulgidus (strain ATCC 49558 / DSM 4304 / JCM 9628 / NBRC 100126 / VC-16).